Here is a 408-residue protein sequence, read N- to C-terminus: Epsin-3 (408 aa).

Position 2 is an N-acetylserine (Ser-2). The region spanning 24–157 (NVVFNYTEME…SDDNKIRAER (134 aa)) is the ENTH domain. A disordered region spans residues 162–182 (ETAKKYKGVAGGSASADGSLN). Phosphoserine is present on residues Ser-196, Ser-198, Ser-203, Ser-212, and Ser-223. 2 disordered regions span residues 199 to 322 (ADFD…ITPA) and 338 to 408 (TAKA…LLSF). Residues 201–210 (FDSDNEDNED) are compositionally biased toward acidic residues. Residues 211 to 231 (GSFSQNGYNDNASRATSTPGQ) are compositionally biased toward polar residues. Basic and acidic residues predominate over residues 249–263 (KPSKELIQEDEKKAD). Residues 264–273 (EEEDDDDEFS) show a composition bias toward acidic residues. Polar residues predominate over residues 279-317 (VPVTNPANSFNLLNTSPIEGMPATTSSMPFYNSSTTDQG). The span at 338–361 (TAKASAEAPSAPKASQAKAAASNP) shows a compositional bias: low complexity. Polar residues-rich tracts occupy residues 362–371 (VSNSTTALST) and 388–398 (QQEQNTNNNHT). Over residues 399–408 (SSKEIDLLSF) the composition is skewed to basic and acidic residues.

Interacts with the clathrin adapter GGA2, and VPS27.

The protein resides in the cytoplasm. The protein localises to the golgi apparatus. Its subcellular location is the trans-Golgi network membrane. It localises to the cytoplasmic vesicle. It is found in the clathrin-coated vesicle membrane. Involved in the recruitment of clathrin to the Golgi network and endosomes to form clathrin coated vesicles. Plays a role in the trafficking of clathrin between the Golgi network and endosomes. Binds to membranes enriched in phosphatidylinositol-3,5-bisphosphate (PtdIns(3,5)P2) and, in association with VPS27, is involved in protein sorting at the multivesicular body (MVB). The chain is Epsin-3 (ENT3) from Saccharomyces cerevisiae (strain ATCC 204508 / S288c) (Baker's yeast).